We begin with the raw amino-acid sequence, 459 residues long: UDP-N-acetylmuramoyl-tripeptide--D-alanyl-D-alanine ligase (459 aa).

Residue 121–127 coordinates ATP; sequence GSSGKTT.

Belongs to the MurCDEF family. MurF subfamily.

It is found in the cytoplasm. The enzyme catalyses D-alanyl-D-alanine + UDP-N-acetyl-alpha-D-muramoyl-L-alanyl-gamma-D-glutamyl-meso-2,6-diaminopimelate + ATP = UDP-N-acetyl-alpha-D-muramoyl-L-alanyl-gamma-D-glutamyl-meso-2,6-diaminopimeloyl-D-alanyl-D-alanine + ADP + phosphate + H(+). Its pathway is cell wall biogenesis; peptidoglycan biosynthesis. Involved in cell wall formation. Catalyzes the final step in the synthesis of UDP-N-acetylmuramoyl-pentapeptide, the precursor of murein. This is UDP-N-acetylmuramoyl-tripeptide--D-alanyl-D-alanine ligase from Treponema pallidum (strain Nichols).